Consider the following 30-residue polypeptide: uncharacterized protein (30 aa).

This is an uncharacterized protein from Dictyostelium discoideum (Social amoeba).